Reading from the N-terminus, the 482-residue chain is Phenylalanine--tRNA ligase alpha subunit (482 aa).

Residues T327, 366 to 368 (QIE), and Y406 contribute to the L-phenylalanine site. E408 serves as a coordination point for Mg(2+). F430 lines the L-phenylalanine pocket.

Belongs to the class-II aminoacyl-tRNA synthetase family. Phe-tRNA synthetase alpha subunit type 2 subfamily. Tetramer of two alpha and two beta subunits. Mg(2+) serves as cofactor.

It localises to the cytoplasm. The enzyme catalyses tRNA(Phe) + L-phenylalanine + ATP = L-phenylalanyl-tRNA(Phe) + AMP + diphosphate + H(+). The protein is Phenylalanine--tRNA ligase alpha subunit of Thermoplasma volcanium (strain ATCC 51530 / DSM 4299 / JCM 9571 / NBRC 15438 / GSS1).